Here is a 195-residue protein sequence, read N- to C-terminus: Imidazoleglycerol-phosphate dehydratase (195 aa).

This sequence belongs to the imidazoleglycerol-phosphate dehydratase family.

It is found in the cytoplasm. The catalysed reaction is D-erythro-1-(imidazol-4-yl)glycerol 3-phosphate = 3-(imidazol-4-yl)-2-oxopropyl phosphate + H2O. Its pathway is amino-acid biosynthesis; L-histidine biosynthesis; L-histidine from 5-phospho-alpha-D-ribose 1-diphosphate: step 6/9. In Pelobacter propionicus (strain DSM 2379 / NBRC 103807 / OttBd1), this protein is Imidazoleglycerol-phosphate dehydratase.